Consider the following 272-residue polypeptide: Sulfur carrier protein FdhD (272 aa).

Residue Cys114 is the Cysteine persulfide intermediate of the active site.

It belongs to the FdhD family.

It is found in the cytoplasm. Required for formate dehydrogenase (FDH) activity. Acts as a sulfur carrier protein that transfers sulfur from IscS to the molybdenum cofactor prior to its insertion into FDH. The protein is Sulfur carrier protein FdhD of Mycolicibacterium paratuberculosis (strain ATCC BAA-968 / K-10) (Mycobacterium paratuberculosis).